The sequence spans 858 residues: DNA mismatch repair protein MutS (858 aa).

600–607 (GPNMSGKS) lines the ATP pocket.

The protein belongs to the DNA mismatch repair MutS family.

In terms of biological role, this protein is involved in the repair of mismatches in DNA. It is possible that it carries out the mismatch recognition step. This protein has a weak ATPase activity. The sequence is that of DNA mismatch repair protein MutS from Bacillus pumilus (strain SAFR-032).